Here is an 860-residue protein sequence, read N- to C-terminus: Leucine--tRNA ligase (860 aa).

Positions 42–52 match the 'HIGH' region motif; it reads PYPSGRLHMGH. The 'KMSKS' region motif lies at 619-623; the sequence is KMSKS. K622 is an ATP binding site.

It belongs to the class-I aminoacyl-tRNA synthetase family.

It localises to the cytoplasm. The enzyme catalyses tRNA(Leu) + L-leucine + ATP = L-leucyl-tRNA(Leu) + AMP + diphosphate. This is Leucine--tRNA ligase from Shigella dysenteriae serotype 1 (strain Sd197).